We begin with the raw amino-acid sequence, 143 residues long: Flagellar assembly factor FliW (143 aa).

This sequence belongs to the FliW family. In terms of assembly, interacts with translational regulator CsrA and flagellin(s).

It localises to the cytoplasm. Its function is as follows. Acts as an anti-CsrA protein, binds CsrA and prevents it from repressing translation of its target genes, one of which is flagellin. Binds to flagellin and participates in the assembly of the flagellum. This chain is Flagellar assembly factor FliW, found in Clostridium novyi (strain NT).